Here is a 460-residue protein sequence, read N- to C-terminus: Methylenetetrahydrofolate--tRNA-(uracil-5-)-methyltransferase TrmFO (460 aa).

Gly15–Gly20 is an FAD binding site.

Belongs to the MnmG family. TrmFO subfamily. FAD serves as cofactor.

It is found in the cytoplasm. It carries out the reaction uridine(54) in tRNA + (6R)-5,10-methylene-5,6,7,8-tetrahydrofolate + NADH + H(+) = 5-methyluridine(54) in tRNA + (6S)-5,6,7,8-tetrahydrofolate + NAD(+). It catalyses the reaction uridine(54) in tRNA + (6R)-5,10-methylene-5,6,7,8-tetrahydrofolate + NADPH + H(+) = 5-methyluridine(54) in tRNA + (6S)-5,6,7,8-tetrahydrofolate + NADP(+). In terms of biological role, catalyzes the folate-dependent formation of 5-methyl-uridine at position 54 (M-5-U54) in all tRNAs. The sequence is that of Methylenetetrahydrofolate--tRNA-(uracil-5-)-methyltransferase TrmFO from Synechococcus sp. (strain CC9902).